Consider the following 819-residue polypeptide: Nonribosomal peptide synthetase 9 (819 aa).

An adenylation (A) domain region spans residues 202–591 (LQAPTQHAVR…GRKDTQAKIR (390 aa)). Residues 722 to 798 (QPRNERERLI…SLAEFLSSSS (77 aa)) enclose the Carrier domain. The residue at position 759 (serine 759) is an O-(pantetheine 4'-phosphoryl)serine.

It belongs to the NRP synthetase family.

It functions in the pathway secondary metabolite biosynthesis. In terms of biological role, nonribosomal peptide synthetase; part of the Fg3_54/C64 gene cluster that mediates the biosynthesis of the octapeptide fusaoctaxin A, a virulence factor that is required for cell-to-cell invasiveness of plant host. The 2 nonribosomal peptide synthetases NRPS9 and NRPS5 form an assembly line which likely utilizes GABA as a starter unit (loaded on the unique module M1 of NRPS9) and sequentially incorporates seven extender units composed of the residues L-Ala, L-allo-Ile, L-Ser, L-Val, L-Ser, L-Leu and L-Leu, respectively. During the process, each of the residues that are tethered on modules M3-M7 of NRPS5 containing an E domain can undergo an epimerization reaction to produce a D-configuration before the transpeptidation reaction occurs. The elongation of the peptidyl chain might be terminated by module M8-mediated L-Leu incorporation, followed by R domain-catalyzed 4 electron reduction to release the resulting octapeptide from the assembly line as an alcohol. Fusaoctaxin A is cleaved by the cluster specific ABC transporter FGM5 to the pentapeptide fusapentaxin A and the tripeptide fusatrixin A. The other enzymes from the cluster, FGM1, FGM2, FGM3 and FGM9 seem not to be involved in the biosynthesis of fusaoctaxin A and their functions have still to be determined. The polypeptide is Nonribosomal peptide synthetase 9 (Gibberella zeae (strain ATCC MYA-4620 / CBS 123657 / FGSC 9075 / NRRL 31084 / PH-1) (Wheat head blight fungus)).